Consider the following 720-residue polypeptide: Aminopeptidase RNPEPL1 (720 aa).

321-325 (VAMEN) contributes to the substrate binding site. H348 provides a ligand contact to Zn(2+). The active-site Proton acceptor is the E349. Residues H352 and E371 each contribute to the Zn(2+) site. The segment at 671-708 (GLGPSAEPSTEPSTDLGGAEADTNPDSPALLLGDEAPS) is disordered.

This sequence belongs to the peptidase M1 family. Zn(2+) serves as cofactor.

The enzyme catalyses Release of N-terminal amino acids, preferentially methionine, from peptides and arylamides.. In terms of biological role, broad specificity aminopeptidase which preferentially hydrolyzes an N-terminal methionine, citrulline or glutamine. This chain is Aminopeptidase RNPEPL1, found in Mus musculus (Mouse).